The following is a 296-amino-acid chain: (+)-neomenthol dehydrogenase (296 aa).

Residue 16 to 40 participates in NADP(+) binding; it reads RGIGFEICRQLASEGIRVVLTSRDE. Ser164 contributes to the substrate binding site. Catalysis depends on Tyr220, which acts as the Proton acceptor.

This sequence belongs to the short-chain dehydrogenases/reductases (SDR) family. Monomer.

The protein localises to the cytoplasm. It catalyses the reaction (+)-neomenthol + NADP(+) = (1R,4S)-menthone + NADPH + H(+). Aldehyde reductase that catalyzes the reduction of the aldehyde carbonyl groups on saturated and alpha,beta-unsaturated aldehydes with more than 5 carbons. Involved in basal resistance against pathogens. The polypeptide is (+)-neomenthol dehydrogenase (SDR1) (Arabidopsis thaliana (Mouse-ear cress)).